The sequence spans 302 residues: MSIKILSESEIKQVANSYQAPAVLFANPKNLYQRRAKRLRDLAQNHPLSDYLLFAADIVESQLSTLEKNPLPPQQLEQLNAIEPLNAKTFKRDSIWREYLTEILDEIKPKANEQIAATIEFLEKTSSAELEEMANKLLAQEFNLVSSDKAVFIWAALSLYWLQAAQQIPHNSQVENAENLHHCPVCGSLPVASIVQIGTSQGLRYLHCNLCESEWNLVRAQCTNCNSHDKLEMWSLDEELALVRAETCGSCESYLKMMFQEKDPYVEPVADDLASIFLDIEMEEKGFARSGLNPFIFPAEEA.

It belongs to the FdhE family.

Its subcellular location is the cytoplasm. Necessary for formate dehydrogenase activity. The polypeptide is Protein FdhE homolog (Haemophilus influenzae (strain PittEE)).